A 671-amino-acid polypeptide reads, in one-letter code: tRNA 5-methylaminomethyl-2-thiouridine biosynthesis bifunctional protein MnmC (671 aa).

Residues 1-245 form a tRNA (mnm(5)s(2)U34)-methyltransferase region; that stretch reads MVNVMNTLSF…KREMLWGEKP (245 aa). The FAD-dependent cmnm(5)s(2)U34 oxidoreductase stretch occupies residues 272–671; the sequence is VGGGVASLFV…RKLLKGSKVE (400 aa).

It in the N-terminal section; belongs to the methyltransferase superfamily. tRNA (mnm(5)s(2)U34)-methyltransferase family. In the C-terminal section; belongs to the DAO family. The cofactor is FAD.

It is found in the cytoplasm. It catalyses the reaction 5-aminomethyl-2-thiouridine(34) in tRNA + S-adenosyl-L-methionine = 5-methylaminomethyl-2-thiouridine(34) in tRNA + S-adenosyl-L-homocysteine + H(+). Its function is as follows. Catalyzes the last two steps in the biosynthesis of 5-methylaminomethyl-2-thiouridine (mnm(5)s(2)U) at the wobble position (U34) in tRNA. Catalyzes the FAD-dependent demodification of cmnm(5)s(2)U34 to nm(5)s(2)U34, followed by the transfer of a methyl group from S-adenosyl-L-methionine to nm(5)s(2)U34, to form mnm(5)s(2)U34. The protein is tRNA 5-methylaminomethyl-2-thiouridine biosynthesis bifunctional protein MnmC of Actinobacillus pleuropneumoniae serotype 5b (strain L20).